A 52-amino-acid chain; its full sequence is Large ribosomal subunit protein bL32c (52 aa).

Belongs to the bacterial ribosomal protein bL32 family.

It is found in the plastid. Its subcellular location is the chloroplast. The chain is Large ribosomal subunit protein bL32c from Lobularia maritima (Sweet alyssum).